Reading from the N-terminus, the 198-residue chain is Armadillo repeat-containing protein 7 (198 aa).

ARM repeat units lie at residues Gln-57–Gly-99 and Leu-100–Pro-140. The residue at position 169 (Ser-169) is a Phosphoserine.

In terms of assembly, component of the minor spliceosome. Within this complex, interacts with RBM48.

As a component of the minor spliceosome, involved in the splicing of U12-type introns in pre-mRNAs. The polypeptide is Armadillo repeat-containing protein 7 (Armc7) (Mus musculus (Mouse)).